The chain runs to 529 residues: MQQRRPVRRALLSVSDKAGIIEFAQALSARGVELLSTGGTARLLAEKGLPVTEVSDYTGFPEMMDGRVKTLHPKIHGGILGRRGQDDAIMEQHHIAPIDMVVVNLYPFAETVAREGCSLEDAVENIDIGGPTMVRSAAKNHKDVAIVVKSSDYDAIIKEMDANEGSLTLDTRFDLAIKAFEHTAAYDSMIANYFGSMVPAYHGESKEAAGRFPRTLNLNFIKKQDMRYGENSHQQAAFYIEENVKEASVATAQQVQGKALSYNNIADTDAALECVKEFNEPACVIVKHANPCGVAVSTTILDAYDRAYKTDPTSAFGGIIAFNRELDAETAQAIISRQFVEVIIAPSATEEALKITAAKQNVRVLTCGQWAQRVPGLDFKRVNGGLLVQDRDLGMVSEAELRVVSKRQPTEQELRDALFCWKVAKFVKSNAIVYAKENMTIGIGAGQMSRVYSAKIAGIKAADEGLEVKGSAMASDAFFPFRDGIDAAAAVGVSCVIQPGGSIRDDEVIAAADEHGIAMIFTDMRHFRH.

An MGS-like domain is found at 1–148; the sequence is MQQRRPVRRA…KNHKDVAIVV (148 aa).

The protein belongs to the PurH family.

The enzyme catalyses (6R)-10-formyltetrahydrofolate + 5-amino-1-(5-phospho-beta-D-ribosyl)imidazole-4-carboxamide = 5-formamido-1-(5-phospho-D-ribosyl)imidazole-4-carboxamide + (6S)-5,6,7,8-tetrahydrofolate. The catalysed reaction is IMP + H2O = 5-formamido-1-(5-phospho-D-ribosyl)imidazole-4-carboxamide. The protein operates within purine metabolism; IMP biosynthesis via de novo pathway; 5-formamido-1-(5-phospho-D-ribosyl)imidazole-4-carboxamide from 5-amino-1-(5-phospho-D-ribosyl)imidazole-4-carboxamide (10-formyl THF route): step 1/1. Its pathway is purine metabolism; IMP biosynthesis via de novo pathway; IMP from 5-formamido-1-(5-phospho-D-ribosyl)imidazole-4-carboxamide: step 1/1. The chain is Bifunctional purine biosynthesis protein PurH from Salmonella heidelberg (strain SL476).